A 364-amino-acid chain; its full sequence is Dermonecrotic toxin SPH (364 aa).

An N-terminal signal peptide occupies residues 1-17; sequence MIRIFALITALAITVKC. Residue His29 is the Nucleophile of the active site. Residues Glu49 and Asp51 each contribute to the Mg(2+) site. His65 is a catalytic residue. 2 disulfides stabilise this stretch: Cys69/Cys75 and Cys71/Cys215. Asp109 lines the Mg(2+) pocket.

The protein belongs to the arthropod phospholipase D family. Mg(2+) is required as a cofactor. As to expression, expressed in salivary glands.

Its subcellular location is the secreted. It catalyses the reaction an N-(acyl)-sphingosylphosphocholine = an N-(acyl)-sphingosyl-1,3-cyclic phosphate + choline. It carries out the reaction an N-(acyl)-sphingosylphosphoethanolamine = an N-(acyl)-sphingosyl-1,3-cyclic phosphate + ethanolamine. The enzyme catalyses a 1-acyl-sn-glycero-3-phosphocholine = a 1-acyl-sn-glycero-2,3-cyclic phosphate + choline. The catalysed reaction is a 1-acyl-sn-glycero-3-phosphoethanolamine = a 1-acyl-sn-glycero-2,3-cyclic phosphate + ethanolamine. Dermonecrotic toxins cleave the phosphodiester linkage between the phosphate and headgroup of certain phospholipids (sphingolipid and lysolipid substrates), forming an alcohol (often choline) and a cyclic phosphate. Acts on sphingomyelin (SM). It may also act on ceramide phosphoethanolamine (CPE), lysophosphatidylcholine (LPC) and lysophosphatidylethanolamine (LPE), but not on lysophosphatidylserine (LPS), and lysophosphatidylglycerol (LPG). It acts by transphosphatidylation, releasing exclusively cyclic phosphate products as second products. Induces dermonecrosis, hemolysis, increased vascular permeability, edema, inflammatory response, and platelet aggregation. The protein is Dermonecrotic toxin SPH (SPH) of Ixodes scapularis (Black-legged tick).